Reading from the N-terminus, the 56-residue chain is Large ribosomal subunit protein bL33 (56 aa).

It belongs to the bacterial ribosomal protein bL33 family.

The sequence is that of Large ribosomal subunit protein bL33 from Rickettsia typhi (strain ATCC VR-144 / Wilmington).